The sequence spans 223 residues: Lipoprotein signal peptidase (223 aa).

The interval 1–20 is disordered; sequence MNSAKVNPSGHAPTPAPTAS. 4 helical membrane passes run 32–52, 65–85, 91–111, and 116–136; these read LFFGLAIAGGALDLWSKEAIF, WIIEGYFGIETAVNIGAVFGL, LVFAAISVFAAAAIIAWLFFF, and SCWLTFALGCITGGIIGNLYD. Active-site residues include Asp-156 and Asp-175. A helical transmembrane segment spans residues 173–193; it reads IADSLLVTGAIMLLVQSFFFP. The interval 196-223 is disordered; it reads PHGEADGNELPGRRAPDEPTEGTKPAAS.

This sequence belongs to the peptidase A8 family.

Its subcellular location is the cell inner membrane. It carries out the reaction Release of signal peptides from bacterial membrane prolipoproteins. Hydrolyzes -Xaa-Yaa-Zaa-|-(S,diacylglyceryl)Cys-, in which Xaa is hydrophobic (preferably Leu), and Yaa (Ala or Ser) and Zaa (Gly or Ala) have small, neutral side chains.. Its pathway is protein modification; lipoprotein biosynthesis (signal peptide cleavage). This protein specifically catalyzes the removal of signal peptides from prolipoproteins. The chain is Lipoprotein signal peptidase from Rhodopirellula baltica (strain DSM 10527 / NCIMB 13988 / SH1).